We begin with the raw amino-acid sequence, 795 residues long: Glutamine--tRNA ligase, cytoplasmic (795 aa).

Residues 188–220 are disordered; the sequence is ADNEKPTKKKEKKEKPAKVEEKKAVVETTAEPS. The span at 200–212 shows a compositional bias: basic and acidic residues; it reads KEKPAKVEEKKAV. Positions 277–287 match the 'HIGH' region motif; it reads PEPNGYLHIGH. ATP contacts are provided by residues 278–280 and 284–290; these read EPN and HIGHAKA. L-glutamine is bound by residues D310 and Y450. ATP is bound by residues T469, 498-499, and 506-508; these read RL and MSK. The 'KMSKS' region signature appears at 505–509; sequence VMSKR.

The protein belongs to the class-I aminoacyl-tRNA synthetase family.

Its subcellular location is the cytoplasm. The protein localises to the cytosol. The catalysed reaction is tRNA(Gln) + L-glutamine + ATP = L-glutaminyl-tRNA(Gln) + AMP + diphosphate. The chain is Glutamine--tRNA ligase, cytoplasmic from Arabidopsis thaliana (Mouse-ear cress).